Reading from the N-terminus, the 231-residue chain is Fibronectin type III domain-containing protein 4 (231 aa).

The signal sequence occupies residues 1 to 40; sequence MPLAPPANSVETMASLMPLSPYLSPTVLLLVSCDLGFVRA. Over 41–163 the chain is Extracellular; the sequence is DRPPSPVNVT…GLDGERPLQT (123 aa). One can recognise a Fibronectin type-III domain in the interval 43–136; that stretch reads PPSPVNVTVT…PRVHFRTLKG (94 aa). N-linked (GlcNAc...) asparagine glycosylation is found at N48 and N143. The interval 118-156 is disordered; that stretch reads GLRGESPPGPRVHFRTLKGSDRLPSNSSSPGDITVEGLD. A helical transmembrane segment spans residues 164 to 184; that stretch reads GEVVIIVVVLLMWAAVIGLFC. The Cytoplasmic segment spans residues 185–231; sequence RQYDIIKDNDSNNNPKEKGKGPEQSPQGRPVGTTRQKKSPSINTIDV. The span at 193 to 205 shows a compositional bias: basic and acidic residues; that stretch reads NDSNNNPKEKGKG. The tract at residues 193 to 231 is disordered; sequence NDSNNNPKEKGKGPEQSPQGRPVGTTRQKKSPSINTIDV.

As to expression, predominantly expressed in the liver and in the brain, including in the cortex, hypothalamus and hippocampus. Also expressed in heart, lung, kidney and testis. In the colon, expressed in the epithelium and in a subset of immune cells in lymphoid aggregates.

Its subcellular location is the membrane. It localises to the secreted. In terms of biological role, has anti-inflammatory properties. In the colon, acts on macrophages to down-regulate inflammation. May suppress osteoclastogenesis and mature osteoclast resorptive function. In white adipose tissue, decreases local inflammation, via interaction with GPR116. Also required for proper systemic glucose tolerance, specifically sensitizing white adipocytes to insulin and promoting glucose uptake. The insulin sensitizing function in adipose tissue is mediated by interaction with ADGRF5/GPR116 and activation of cAMP signaling. This is Fibronectin type III domain-containing protein 4 (Fndc4) from Mus musculus (Mouse).